A 583-amino-acid chain; its full sequence is MNNREITSLWSRIIIEELVRLGAGFFCISPGSRSTPLTVAAARHPEAAWKMFPDERSAGFFALGYARATQKPAVLICTSGTAVANYYPAVVEASMDCQPMLILSADRPFELLETGANQTIQQFGIFGGYSRWNFRLPEPSSDVPLRSVITAIDHAVSSATGSLPGPVHINVPFREPFEPLDPDLHDPWLAPVSEWIDTSTPLCRTLSQERVPNRESISSLRKIIAESKLPFMIAGRLNNRSDSLAVGNLARSLNIPLYADLSSGLRLDSSFNPLQLAFQSSQFPERFRPDTVIHFGGPLVARQPSAAVRMWNPRNHIVIKPHANRFGPDHNITLSIEASPALIAEALLGCRTPLPSGCQPLPEPFFQQAKAEIDICCLPDHPVSEISAARIVSSLVTPESGLFLSNSMPVRDMDLYASPSASRPFMTGMNRGASGIDGIISTAAGFAKGLRKPVTLMIGDIAFLHDLNALSLLPSLQVPLCIVVLNNNGGGIFSFLPVASEKDVFETCFATPQSYSIKAAAETFGIESSRPATNRDFEECCRKAAESDRCSIIEVKGNRRNNVELHRTLQSKITALGASYLSR.

This sequence belongs to the TPP enzyme family. MenD subfamily. Homodimer. Requires Mg(2+) as cofactor. The cofactor is Mn(2+). Thiamine diphosphate is required as a cofactor.

The enzyme catalyses isochorismate + 2-oxoglutarate + H(+) = 5-enolpyruvoyl-6-hydroxy-2-succinyl-cyclohex-3-ene-1-carboxylate + CO2. It functions in the pathway quinol/quinone metabolism; 1,4-dihydroxy-2-naphthoate biosynthesis; 1,4-dihydroxy-2-naphthoate from chorismate: step 2/7. Its pathway is quinol/quinone metabolism; menaquinone biosynthesis. Its function is as follows. Catalyzes the thiamine diphosphate-dependent decarboxylation of 2-oxoglutarate and the subsequent addition of the resulting succinic semialdehyde-thiamine pyrophosphate anion to isochorismate to yield 2-succinyl-5-enolpyruvyl-6-hydroxy-3-cyclohexene-1-carboxylate (SEPHCHC). The chain is 2-succinyl-5-enolpyruvyl-6-hydroxy-3-cyclohexene-1-carboxylate synthase from Chlorobium limicola (strain DSM 245 / NBRC 103803 / 6330).